A 323-amino-acid polypeptide reads, in one-letter code: Deaminated glutathione amidase (323 aa).

The transit peptide at 1–33 (MLGFITRPPHQLLCTGYRLLRTPVLCTQPRPRT) directs the protein to the mitochondrion. In terms of domain architecture, CN hydrolase spans 42–294 (LPLVAVCQVT…PGLCLARIDL (253 aa)). Glu82 acts as the Proton acceptor in catalysis. Lys157 serves as the catalytic Proton donor. Cys199 acts as the Nucleophile in catalysis.

This sequence belongs to the carbon-nitrogen hydrolase superfamily. NIT1/NIT2 family. In terms of tissue distribution, expressed in most tissues with higher expression in adult liver and kidney as well as in fetal adrenal gland and skeletal muscle.

It is found in the mitochondrion. The protein localises to the cytoplasm. The catalysed reaction is N-(4-oxoglutaryl)-L-cysteinylglycine + H2O = L-cysteinylglycine + 2-oxoglutarate. It carries out the reaction N-(4-carboxy-4-oxobutanoyl)-L-ethylglycylglycine + H2O = N-(2-aminobutanoyl)glycine + 2-oxoglutarate. Catalyzes the hydrolysis of the amide bond in N-(4-oxoglutarate)-L-cysteinylglycine (deaminated glutathione), a metabolite repair reaction to dispose of the harmful deaminated glutathione. Possesses amidase activity toward deaminated ophthalmate in vitro. Plays a role in cell growth and apoptosis: loss of expression promotes cell growth, resistance to DNA damage stress and increased incidence to NMBA-induced tumors. Has tumor suppressor properties that enhances the apoptotic responsiveness in cancer cells; this effect is additive to the tumor suppressor activity of FHIT. It is also a negative regulator of primary T-cells. The sequence is that of Deaminated glutathione amidase from Mus musculus (Mouse).